We begin with the raw amino-acid sequence, 405 residues long: Acetylornithine/succinyldiaminopimelate aminotransferase (405 aa).

Residues 108-109 and Phe141 contribute to the pyridoxal 5'-phosphate site; that span reads GT. A N(2)-acetyl-L-ornithine-binding site is contributed by Arg144. A pyridoxal 5'-phosphate-binding site is contributed by 226–229; that stretch reads DEVQ. Residue Lys255 is modified to N6-(pyridoxal phosphate)lysine. Residue Ser283 participates in N(2)-acetyl-L-ornithine binding. Thr284 contacts pyridoxal 5'-phosphate.

This sequence belongs to the class-III pyridoxal-phosphate-dependent aminotransferase family. ArgD subfamily. As to quaternary structure, homodimer. Pyridoxal 5'-phosphate serves as cofactor.

Its subcellular location is the cytoplasm. It carries out the reaction N(2)-acetyl-L-ornithine + 2-oxoglutarate = N-acetyl-L-glutamate 5-semialdehyde + L-glutamate. It catalyses the reaction N-succinyl-(2S,6S)-2,6-diaminopimelate + 2-oxoglutarate = (S)-2-succinylamino-6-oxoheptanedioate + L-glutamate. Its pathway is amino-acid biosynthesis; L-arginine biosynthesis; N(2)-acetyl-L-ornithine from L-glutamate: step 4/4. It participates in amino-acid biosynthesis; L-lysine biosynthesis via DAP pathway; LL-2,6-diaminopimelate from (S)-tetrahydrodipicolinate (succinylase route): step 2/3. In terms of biological role, involved in both the arginine and lysine biosynthetic pathways. The polypeptide is Acetylornithine/succinyldiaminopimelate aminotransferase (Salmonella typhi).